Consider the following 828-residue polypeptide: MKLSRRDFMKANAAVAAAAAAGLTIPTVVQAAAGSADSIKWDKAPCRFCGTGCGVLVGTQNGRIVASQGDPEAAVNRGLSCIKGYFLPKIMYGKDRLNQPLLRMKDGQYHKEGEFTPVSWQQAFDIMAEKFKQALKEKGPEAVGMFGSGQWTVWEGYAAAKLLKAGLRSNNLDPNARHCMASAVVGFMRTFGMDEPMGCYDDIEQADAFVLWGSNMAEMHPILWSRITDRRLSNEKVNVSVLSTFEHRSFELADNGMVFTPQTDLAIMNYIANYIIQNNAVDQDFLNRHVNFRRGATDIGYGLRPTDPLEKAAKNPGSDASDPMSFEEYKAFVADYTLEKTAKMSGVPEDQLEALAKLYADPNIKVVSYWTMGFNQHTRGVWANNLCYNLHLLTGKISKPGCGPFSLTGQPSACGTAREVGTFAHRLPADMVVTNEKHRQTAEQKWQLPAGTIPAKVGLHAVAQDRALKDGTLNAYWVMCNNNMQAGPNINEDRMPGWRDARNFVVVSDPYPTVSALAADLILPTAMWVEKEGAYGNAERRTQFWRQQVKAPGEAKSDLWQLVEFSKRFTVEEVWPAELLAQKPEYRGKTLYDVLFANGEVNKYPLTEIPADQLNDEARDFGFYLQKGLFEEYAGFGRGHGHDLAPFDSYHQARGLRWPVVEGKETLWRYREGTDPYVKAGEEVRFYGKPDGKAVIFALPFEPAAESPDKEYDLWLSTGRVLEHWHTGSMTRRVPELHRAFPQAVVFIHPLDAKSRNLRRGEKVRVLSRRGELISTVETRGRNRPPRGLVYMPFFDAAQLVNNLTLDATDPLSKEVDFKKCAVKLEKV.

Positions 1–33 form a signal peptide, tat-type signal; it reads MKLSRRDFMKANAAVAAAAAAGLTIPTVVQAAA. One can recognise a 4Fe-4S Mo/W bis-MGD-type domain in the interval 39–95; that stretch reads IKWDKAPCRFCGTGCGVLVGTQNGRIVASQGDPEAAVNRGLSCIKGYFLPKIMYGKD. Positions 46, 49, 53, and 81 each coordinate [4Fe-4S] cluster. Mo-bis(molybdopterin guanine dinucleotide)-binding positions include Lys83, Gln150, Asn175, Cys179, 212–219, 243–247, 262–264, Met372, Gln376, Asn482, 508–509, Lys531, Asp558, and 718–727; these read WGSNMAEM, STFEH, QTD, SD, and TGRVLEHWHT. Position 794 (Phe794) interacts with substrate. 2 residues coordinate Mo-bis(molybdopterin guanine dinucleotide): Asn802 and Lys819.

This sequence belongs to the prokaryotic molybdopterin-containing oxidoreductase family. NasA/NapA/NarB subfamily. As to quaternary structure, component of the periplasmic nitrate reductase NapAB complex composed of NapA and NapB. [4Fe-4S] cluster serves as cofactor. It depends on Mo-bis(molybdopterin guanine dinucleotide) as a cofactor. In terms of processing, predicted to be exported by the Tat system. The position of the signal peptide cleavage has not been experimentally proven.

It localises to the periplasm. The catalysed reaction is 2 Fe(II)-[cytochrome] + nitrate + 2 H(+) = 2 Fe(III)-[cytochrome] + nitrite + H2O. Its function is as follows. Catalytic subunit of the periplasmic nitrate reductase complex NapAB. Receives electrons from NapB and catalyzes the reduction of nitrate to nitrite. The chain is Periplasmic nitrate reductase from Serratia proteamaculans (strain 568).